Reading from the N-terminus, the 457-residue chain is Multidrug resistance protein MdtK (457 aa).

Helical transmembrane passes span L11–V31, I53–A73, W93–I113, A127–L147, G160–Y180, L188–M208, L243–V263, I276–T296, I316–F336, L357–V377, I387–G407, and M416–M436.

It belongs to the multi antimicrobial extrusion (MATE) (TC 2.A.66.1) family. MdtK subfamily.

It is found in the cell inner membrane. In terms of biological role, multidrug efflux pump that functions probably as a Na(+)/drug antiporter. In Proteus mirabilis (strain HI4320), this protein is Multidrug resistance protein MdtK.